The primary structure comprises 432 residues: tRNA(Ile)-lysidine synthase (432 aa).

Position 19 to 24 (19 to 24) interacts with ATP; the sequence is STGIDS.

Belongs to the tRNA(Ile)-lysidine synthase family.

Its subcellular location is the cytoplasm. It carries out the reaction cytidine(34) in tRNA(Ile2) + L-lysine + ATP = lysidine(34) in tRNA(Ile2) + AMP + diphosphate + H(+). Functionally, ligates lysine onto the cytidine present at position 34 of the AUA codon-specific tRNA(Ile) that contains the anticodon CAU, in an ATP-dependent manner. Cytidine is converted to lysidine, thus changing the amino acid specificity of the tRNA from methionine to isoleucine. This chain is tRNA(Ile)-lysidine synthase, found in Staphylococcus epidermidis (strain ATCC 35984 / DSM 28319 / BCRC 17069 / CCUG 31568 / BM 3577 / RP62A).